Consider the following 100-residue polypeptide: Large ribosomal subunit protein bL21 (100 aa).

It belongs to the bacterial ribosomal protein bL21 family. As to quaternary structure, part of the 50S ribosomal subunit. Contacts protein L20.

Its function is as follows. This protein binds to 23S rRNA in the presence of protein L20. The sequence is that of Large ribosomal subunit protein bL21 from Corynebacterium urealyticum (strain ATCC 43042 / DSM 7109).